The chain runs to 157 residues: Transcriptional repressor NrdR (157 aa).

A zinc finger spans residues 3–34 (CPFCNAEDTKVIDSRLVEEGTQVRRRRECLKC). In terms of domain architecture, ATP-cone spans 49-139 (PRIIKRDGRR…VYRSFQDINA (91 aa)).

Belongs to the NrdR family. Requires Zn(2+) as cofactor.

Functionally, negatively regulates transcription of bacterial ribonucleotide reductase nrd genes and operons by binding to NrdR-boxes. The chain is Transcriptional repressor NrdR from Coxiella burnetii (strain CbuK_Q154) (Coxiella burnetii (strain Q154)).